The chain runs to 502 residues: T-complex protein 11-like X-linked protein 1 (502 aa).

The disordered stretch occupies residues 1–36; sequence MPKTEETVLQNDPSVAENGAPEPKTPGQSQKSKSFC.

This sequence belongs to the TCP11 family.

The chain is T-complex protein 11-like X-linked protein 1 from Homo sapiens (Human).